A 339-amino-acid polypeptide reads, in one-letter code: Heat-inducible transcription repressor HrcA (339 aa).

This sequence belongs to the HrcA family.

Its function is as follows. Negative regulator of class I heat shock genes (grpE-dnaK-dnaJ and groELS operons). Prevents heat-shock induction of these operons. The sequence is that of Heat-inducible transcription repressor HrcA from Paraburkholderia xenovorans (strain LB400).